The sequence spans 92 residues: Large ribosomal subunit protein eL43 (92 aa).

Residues Cys-39, Cys-42, Cys-57, and Cys-60 each contribute to the Zn(2+) site. Residues 39-60 (CSFCGKTKMKRRAVGIWHCGSC) form a C4-type zinc finger.

It belongs to the eukaryotic ribosomal protein eL43 family. As to quaternary structure, component of the large ribosomal subunit.

The protein resides in the cytoplasm. Functionally, component of the large ribosomal subunit. The ribosome is a large ribonucleoprotein complex responsible for the synthesis of proteins in the cell. This chain is Large ribosomal subunit protein eL43 (rpl37a), found in Ictalurus punctatus (Channel catfish).